We begin with the raw amino-acid sequence, 104 residues long: Protein RnfH (104 aa).

This sequence belongs to the UPF0125 (RnfH) family.

This Pseudomonas fluorescens (strain Pf0-1) protein is Protein RnfH.